A 68-amino-acid polypeptide reads, in one-letter code: Conotoxin VnMMSK-01 (68 aa).

An N-terminal signal peptide occupies residues 1 to 20 (MMSKLGVLLTICLLLFPLTA). Residues 21 to 50 (VPMDGDQPADLPALRTQDFEPERSPWFDPV) constitute a propeptide that is removed on maturation. Intrachain disulfides connect Cys53-Cys65, Cys54-Cys61, and Cys58-Cys64. Pro63 carries the post-translational modification 4-hydroxyproline.

Belongs to the conotoxin M superfamily. As to expression, expressed by the venom duct.

The protein localises to the secreted. This chain is Conotoxin VnMMSK-01, found in Conus ventricosus (Mediterranean cone).